The sequence spans 273 residues: Rhamnulose-1-phosphate aldolase (273 aa).

The active site involves glutamate 117. Residues histidine 140, histidine 142, and histidine 211 each contribute to the Zn(2+) site.

This sequence belongs to the aldolase class II family. RhaD subfamily. Requires Zn(2+) as cofactor.

Its subcellular location is the cytoplasm. The catalysed reaction is L-rhamnulose 1-phosphate = (S)-lactaldehyde + dihydroxyacetone phosphate. It participates in carbohydrate degradation; L-rhamnose degradation; glycerone phosphate from L-rhamnose: step 3/3. Its function is as follows. Catalyzes the reversible cleavage of L-rhamnulose-1-phosphate to dihydroxyacetone phosphate (DHAP) and L-lactaldehyde. The protein is Rhamnulose-1-phosphate aldolase of Listeria innocua serovar 6a (strain ATCC BAA-680 / CLIP 11262).